Reading from the N-terminus, the 394-residue chain is Guanine nucleotide-binding protein G(s) subunit alpha (394 aa).

Residues 1–23 form a disordered region; sequence MGCLGNSKTEDQRNEEKAQREAN. Residue Gly-2 is the site of N-palmitoyl glycine attachment. Cys-3 carries the S-palmitoyl cysteine lipid modification. Positions 8 to 23 are enriched in basic and acidic residues; it reads KTEDQRNEEKAQREAN. In terms of domain architecture, G-alpha spans 39-394; it reads ATHRLLLLGA…RMHLRQYELL (356 aa). A G1 motif region spans residues 42–55; that stretch reads RLLLLGAGESGKST. GTP is bound at residue 47–55; sequence GAGESGKST. Ser-54 contacts Mg(2+). A disordered region spans residues 68 to 90; it reads FNGEGGEEDPQAARSNSDGEKAT. Positions 196–204 are G2 motif; it reads DLLRCRVLT. GTP is bound by residues 197-204, 223-227, 292-295, and Ala-366; these read LLRCRVLT, DVGGQ, and NKQD. Mg(2+) is bound at residue Thr-204. Residues 219–228 form a G3 motif region; sequence FHMFDVGGQR. The G4 motif stretch occupies residues 288–295; the sequence is ILFLNKQD. Positions 364–369 are G5 motif; it reads TCAVDT.

It belongs to the G-alpha family. G(s) subfamily. Heterotrimeric G proteins are composed of 3 units; alpha, beta and gamma. The alpha chain contains the guanine nucleotide binding site. Interacts with CRY1; the interaction may block GPCR-mediated regulation of cAMP concentrations. Interacts with ADCY6 and stimulates its adenylyl cyclase activity. Interacts with ADCY2 and ADCY5. Stimulates the ADCY5 adenylyl cyclase activity. Interaction with SASH1.

It localises to the cell membrane. Its function is as follows. Guanine nucleotide-binding proteins (G proteins) function as transducers in numerous signaling pathways controlled by G protein-coupled receptors (GPCRs). Signaling involves the activation of adenylyl cyclases, resulting in increased levels of the signaling molecule cAMP. GNAS functions downstream of several GPCRs, including beta-adrenergic receptors. Stimulates the Ras signaling pathway via RAPGEF2. In Cricetulus griseus (Chinese hamster), this protein is Guanine nucleotide-binding protein G(s) subunit alpha (GNAS).